The chain runs to 707 residues: Nucleolin 2 (707 aa).

The interval 1–446 (MGKSSKKSAV…TPASNQNQAT (446 aa)) is disordered. Basic and acidic residues-rich tracts occupy residues 30–40 (RNAEDEIEKAV) and 47–60 (TVRE…EEAK). 3 stretches are compositionally biased toward acidic residues: residues 75 to 85 (SSEEDSSESEE), 108 to 120 (SSDD…SSDD), and 144 to 153 (DSSDESLSDD). Over residues 158-170 (KPAAPLKKPVALA) the composition is skewed to low complexity. 3 stretches are compositionally biased toward acidic residues: residues 219–232 (DSSD…SDED), 248–263 (SESS…DDEA), and 271–287 (ESSD…SDSD). Residues 300–311 (LTKDTKKGQSKD) show a composition bias toward basic and acidic residues. A compositionally biased stretch (acidic residues) spans 312–326 (ESEDSSDESSEESGD). Residues 336-347 (STTSGTTKPSPK) show a composition bias toward low complexity. Positions 355-370 (SDDESDEDDSSDESSD) are enriched in acidic residues. Positions 376–394 (KQTQAKKQAPVAQESSSSD) are enriched in low complexity. The span at 395 to 406 (ESSEEDSDMESD) shows a compositional bias: acidic residues. The span at 407–417 (EPAKTPQKKET) shows a compositional bias: basic and acidic residues. The span at 420–429 (SVGSNKSATK) shows a compositional bias: polar residues. An RRM 1 domain is found at 449-525 (KTLFVGNLPY…RPVRLDLARE (77 aa)). Disordered stretches follow at residues 527–546 (GAYT…PAQS) and 629–707 (RPRP…GDDD). Residues 549-630 (NTIFIKGFDT…YSLYVDEARP (82 aa)) enclose the RRM 2 domain. A compositionally biased stretch (basic and acidic residues) spans 657–681 (GRGDGSRGRGDRGRGRGFGRGDRGH).

Its subcellular location is the nucleus. The protein resides in the nucleolus. Involved in pre-rRNA processing and ribosome assembly. This is Nucleolin 2 from Oryza sativa subsp. japonica (Rice).